Consider the following 71-residue polypeptide: MVESTFEPNITTKSVGQAIRAHLRVLKLTKKPSREEFLTIAKVAGAGILAVGAIGFIIYVLLTMLPQWVSQ.

The helical transmembrane segment at 43–63 threads the bilayer; sequence VAGAGILAVGAIGFIIYVLLT.

This sequence belongs to the SecE/SEC61-gamma family. In terms of assembly, component of the Sec protein translocase complex. Heterotrimer consisting of SecY (alpha), SecG (beta) and SecE (gamma) subunits. The heterotrimers can form oligomers, although 1 heterotrimer is thought to be able to translocate proteins. Interacts with the ribosome. May interact with SecDF, and other proteins may be involved.

It is found in the cell membrane. Its function is as follows. Essential subunit of the Sec protein translocation channel SecYEG. Clamps together the 2 halves of SecY. May contact the channel plug during translocation. The protein is Protein translocase subunit SecE of Methanosarcina acetivorans (strain ATCC 35395 / DSM 2834 / JCM 12185 / C2A).